Reading from the N-terminus, the 93-residue chain is uncharacterized protein (93 aa).

The N-terminal stretch at 1–11 (MALMVLMALVG) is a signal peptide. Cys12 carries N-palmitoyl cysteine lipidation. Residue Cys12 is the site of S-diacylglycerol cysteine attachment.

Its subcellular location is the cell membrane. This is an uncharacterized protein from Escherichia coli O6:K15:H31 (strain 536 / UPEC).